Here is a 491-residue protein sequence, read N- to C-terminus: Cobyric acid synthase (491 aa).

The 177-residue stretch at 253–429 (AHRVAVVRLP…WHGSLEGDAL (177 aa)) folds into the GATase cobBQ-type domain. The active-site Nucleophile is the Cys334. The active site involves His421.

The protein belongs to the CobB/CobQ family. CobQ subfamily.

Its pathway is cofactor biosynthesis; adenosylcobalamin biosynthesis. Functionally, catalyzes amidations at positions B, D, E, and G on adenosylcobyrinic A,C-diamide. NH(2) groups are provided by glutamine, and one molecule of ATP is hydrogenolyzed for each amidation. In Mycobacterium ulcerans (strain Agy99), this protein is Cobyric acid synthase.